Consider the following 78-residue polypeptide: Large ribosomal subunit protein bL28 (78 aa).

The segment at 1–21 (MSRVCQVTGKRPVSGNNRSHA) is disordered.

It belongs to the bacterial ribosomal protein bL28 family.

The polypeptide is Large ribosomal subunit protein bL28 (Yersinia enterocolitica serotype O:8 / biotype 1B (strain NCTC 13174 / 8081)).